We begin with the raw amino-acid sequence, 823 residues long: Molybdenum cofactor sulfurase (823 aa).

At lysine 228 the chain carries N6-(pyridoxal phosphate)lysine. Cysteine 392 is an active-site residue. The disordered stretch occupies residues 628–667; that stretch reads SSTRLAEPRRGLGSRKSPLRPAMPGAFPQDTPTPEAERNP. Positions 644–819 constitute an MOSC domain; sequence SPLRPAMPGA…VMVGDVVTPS (176 aa).

The protein belongs to the class-V pyridoxal-phosphate-dependent aminotransferase family. MOCOS subfamily. Pyridoxal 5'-phosphate is required as a cofactor.

The catalysed reaction is Mo-molybdopterin + L-cysteine + AH2 = thio-Mo-molybdopterin + L-alanine + A + H2O. It participates in cofactor biosynthesis; molybdopterin biosynthesis. Its function is as follows. Sulfurates the molybdenum cofactor. Sulfation of molybdenum is essential for xanthine dehydrogenase (XDH) and aldehyde oxidase (ADO) enzymes in which molybdenum cofactor is liganded by 1 oxygen and 1 sulfur atom in active form. This chain is Molybdenum cofactor sulfurase, found in Aspergillus niger (strain ATCC MYA-4892 / CBS 513.88 / FGSC A1513).